The primary structure comprises 464 residues: NADH-ubiquinone oxidoreductase chain 4 (464 aa).

A run of 13 helical transmembrane segments spans residues Leu-18–Thr-38, Ile-54–Trp-74, Ser-79–Cys-99, Met-102–Leu-122, Ala-131–Gly-151, Val-168–Val-188, Pro-207–Ile-227, Val-239–Ile-259, Leu-266–Leu-286, Leu-297–Ile-317, Gly-332–Ile-352, Thr-375–Val-395, and Leu-420–Ile-440.

It belongs to the complex I subunit 4 family.

The protein resides in the mitochondrion membrane. The catalysed reaction is a ubiquinone + NADH + 5 H(+)(in) = a ubiquinol + NAD(+) + 4 H(+)(out). Its function is as follows. Core subunit of the mitochondrial membrane respiratory chain NADH dehydrogenase (Complex I) that is believed to belong to the minimal assembly required for catalysis. Complex I functions in the transfer of electrons from NADH to the respiratory chain. The immediate electron acceptor for the enzyme is believed to be ubiquinone. This is NADH-ubiquinone oxidoreductase chain 4 (NAD4) from Candida albicans (strain SC5314 / ATCC MYA-2876) (Yeast).